The primary structure comprises 511 residues: Histidine ammonia-lyase (511 aa).

The segment at residues 143–145 (ASG) is a cross-link (5-imidazolinone (Ala-Gly)). Serine 144 is modified (2,3-didehydroalanine (Ser)).

Belongs to the PAL/histidase family. Contains an active site 4-methylidene-imidazol-5-one (MIO), which is formed autocatalytically by cyclization and dehydration of residues Ala-Ser-Gly.

Its subcellular location is the cytoplasm. The enzyme catalyses L-histidine = trans-urocanate + NH4(+). Its pathway is amino-acid degradation; L-histidine degradation into L-glutamate; N-formimidoyl-L-glutamate from L-histidine: step 1/3. This Vibrio parahaemolyticus serotype O3:K6 (strain RIMD 2210633) protein is Histidine ammonia-lyase.